We begin with the raw amino-acid sequence, 480 residues long: UDP-N-acetylmuramoylalanine--D-glutamate ligase (480 aa).

Residue 110 to 116 (GTNGKST) coordinates ATP.

This sequence belongs to the MurCDEF family.

It is found in the cytoplasm. The enzyme catalyses UDP-N-acetyl-alpha-D-muramoyl-L-alanine + D-glutamate + ATP = UDP-N-acetyl-alpha-D-muramoyl-L-alanyl-D-glutamate + ADP + phosphate + H(+). Its pathway is cell wall biogenesis; peptidoglycan biosynthesis. In terms of biological role, cell wall formation. Catalyzes the addition of glutamate to the nucleotide precursor UDP-N-acetylmuramoyl-L-alanine (UMA). This Synechococcus sp. (strain JA-2-3B'a(2-13)) (Cyanobacteria bacterium Yellowstone B-Prime) protein is UDP-N-acetylmuramoylalanine--D-glutamate ligase.